A 630-amino-acid chain; its full sequence is 1-deoxy-D-xylulose-5-phosphate synthase (630 aa).

Residues histidine 80 and 121 to 123 (GHS) contribute to the thiamine diphosphate site. Position 152 (aspartate 152) interacts with Mg(2+). Residues 153 to 154 (GA), asparagine 181, tyrosine 288, and glutamate 370 contribute to the thiamine diphosphate site. Asparagine 181 provides a ligand contact to Mg(2+).

The protein belongs to the transketolase family. DXPS subfamily. Homodimer. Mg(2+) is required as a cofactor. It depends on thiamine diphosphate as a cofactor.

It carries out the reaction D-glyceraldehyde 3-phosphate + pyruvate + H(+) = 1-deoxy-D-xylulose 5-phosphate + CO2. The protein operates within metabolic intermediate biosynthesis; 1-deoxy-D-xylulose 5-phosphate biosynthesis; 1-deoxy-D-xylulose 5-phosphate from D-glyceraldehyde 3-phosphate and pyruvate: step 1/1. Functionally, catalyzes the acyloin condensation reaction between C atoms 2 and 3 of pyruvate and glyceraldehyde 3-phosphate to yield 1-deoxy-D-xylulose-5-phosphate (DXP). This Colwellia psychrerythraea (strain 34H / ATCC BAA-681) (Vibrio psychroerythus) protein is 1-deoxy-D-xylulose-5-phosphate synthase.